Consider the following 132-residue polypeptide: Small ribosomal subunit protein uS8 (132 aa).

This sequence belongs to the universal ribosomal protein uS8 family. Part of the 30S ribosomal subunit. Contacts proteins S5 and S12.

One of the primary rRNA binding proteins, it binds directly to 16S rRNA central domain where it helps coordinate assembly of the platform of the 30S subunit. The polypeptide is Small ribosomal subunit protein uS8 (Clostridium kluyveri (strain NBRC 12016)).